The primary structure comprises 200 residues: Recombination protein RecR (200 aa).

The C4-type zinc-finger motif lies at 59–74 (CDICGNVCESSPCPVC). In terms of domain architecture, Toprim spans 82 to 177 (SVICVVEEPK…KVTRLASGLP (96 aa)).

This sequence belongs to the RecR family.

In terms of biological role, may play a role in DNA repair. It seems to be involved in an RecBC-independent recombinational process of DNA repair. It may act with RecF and RecO. The polypeptide is Recombination protein RecR (Bifidobacterium longum subsp. infantis (strain ATCC 15697 / DSM 20088 / JCM 1222 / NCTC 11817 / S12)).